A 403-amino-acid polypeptide reads, in one-letter code: Putative F-box/LRR-repeat protein At5g38386 (403 aa).

Residues 1 to 47 enclose the F-box domain; it reads MDHLSNLPDELLCHIMSFLTTKEAALISVLSKRWRNLIAFVPNLDIF. 6 LRR repeats span residues 64–91, 93–119, 131–156, 175–203, 243–274, and 275–300; these read IRQLFMDFVDRVLALQGNSPLKKFSLCC, GGSYSDRVDCWIQNVMVRGVSELDLSM, VFENKKLNFEIFLRALPALEELVMNH, LKTLTIKCIVCLHTKSFDTPSLAYLSYSD, YLYFSRDTLEVLSLCCESMPVFKNLKSLSIKS, and VESRGWQAMPVLLRNCPHLETLVLEA.

The chain is Putative F-box/LRR-repeat protein At5g38386 from Arabidopsis thaliana (Mouse-ear cress).